Consider the following 188-residue polypeptide: Mediator of RNA polymerase II transcription subunit 29 (188 aa).

Positions 1 to 11 are enriched in polar residues; sequence MAMLLNQSQPP. The interval 1-27 is disordered; the sequence is MAMLLNQSQPPQGREGGGTQVGSLGPG.

Belongs to the Mediator complex subunit 29 family. In terms of assembly, component of the Mediator complex.

The protein resides in the nucleus. Component of the Mediator complex, a coactivator involved in the regulated transcription of nearly all RNA polymerase II-dependent genes. Mediator functions as a bridge to convey information from gene-specific regulatory proteins to the basal RNA polymerase II transcription machinery. Mediator is recruited to promoters by direct interactions with regulatory proteins and serves as a scaffold for the assembly of a functional preinitiation complex with RNA polymerase II and the general transcription factors. The chain is Mediator of RNA polymerase II transcription subunit 29 (med29) from Xenopus tropicalis (Western clawed frog).